A 281-amino-acid polypeptide reads, in one-letter code: MAFSDLTSRTVHLYDNWIKDADPRVEDWLLMSSPLPQTILLGFYVYFVTSLGPKLMENRKPFELKKAMITYNFFIVLFSVYMCYEFVMSGWGIGYSFRCDIVDYSRSPTALRMARTCWLYYFSKFIELLDTIFFVLRKKNSQVTFLHVFHHTIMPWTWWFGVKFAAGGLGTFHALLNTAVHVVMYSYYGLSALGPAYQKYLWWKKYLTSLQLVQFVIVAIHISQFFFMEDCKYQFPVFACIIMSYSFMFLLLFLHFWYRAYTKGQRLPKTVKNGTCKNKDN.

Ala2 bears the N-acetylalanine mark. Residues 2–27 (AFSDLTSRTVHLYDNWIKDADPRVED) lie on the Lumenal side of the membrane. Residues 28–48 (WLLMSSPLPQTILLGFYVYFV) form a helical membrane-spanning segment. At 49-72 (TSLGPKLMENRKPFELKKAMITYN) the chain is on the cytoplasmic side. A helical membrane pass occupies residues 73–93 (FFIVLFSVYMCYEFVMSGWGI). The Lumenal portion of the chain corresponds to 94-115 (GYSFRCDIVDYSRSPTALRMAR). The cysteines at positions 99 and 231 are disulfide-linked. Residues 116-136 (TCWLYYFSKFIELLDTIFFVL) form a helical membrane-spanning segment. Residues Lys124, Arg137, Lys139, Gln142, and His147 each coordinate 3-oxoeicosanoyl-CoA. The Cytoplasmic portion of the chain corresponds to 137–142 (RKKNSQ). Residues 143–162 (VTFLHVFHHTIMPWTWWFGV) form a helical membrane-spanning segment. The HxxHH motif signature appears at 147–151 (HVFHH). The active-site Nucleophile is the His150. The Lumenal portion of the chain corresponds to 163–171 (KFAAGGLGT). Residues 172 to 194 (FHALLNTAVHVVMYSYYGLSALG) traverse the membrane as a helical segment. Tyr187, Lys204, Thr208, and Gln211 together coordinate 3-oxoeicosanoyl-CoA. Residues 195 to 206 (PAYQKYLWWKKY) lie on the Cytoplasmic side of the membrane. A helical transmembrane segment spans residues 207 to 227 (LTSLQLVQFVIVAIHISQFFF). Residues 228–236 (MEDCKYQFP) lie on the Lumenal side of the membrane. A helical membrane pass occupies residues 237–257 (VFACIIMSYSFMFLLLFLHFW). Residues 258 to 281 (YRAYTKGQRLPKTVKNGTCKNKDN) lie on the Cytoplasmic side of the membrane. Arg266 provides a ligand contact to 3-oxoeicosanoyl-CoA. The short motif at 277–281 (KNKDN) is the Di-lysine motif element.

Belongs to the ELO family. ELOVL7 subfamily. As to quaternary structure, homodimer. Interacts with TECR. As to expression, expressed in most tissues except heart and skeletal muscle.

It is found in the endoplasmic reticulum membrane. It carries out the reaction a very-long-chain acyl-CoA + malonyl-CoA + H(+) = a very-long-chain 3-oxoacyl-CoA + CO2 + CoA. It catalyses the reaction eicosanoyl-CoA + malonyl-CoA + H(+) = 3-oxodocosanoyl-CoA + CO2 + CoA. The enzyme catalyses (5Z,8Z,11Z,14Z)-eicosatetraenoyl-CoA + malonyl-CoA + H(+) = (7Z,10Z,13Z,16Z)-3-oxodocosatetraenoyl-CoA + CO2 + CoA. The catalysed reaction is (6Z,9Z,12Z)-octadecatrienoyl-CoA + malonyl-CoA + H(+) = (8Z,11Z,14Z)-3-oxoeicosatrienoyl-CoA + CO2 + CoA. It carries out the reaction (9Z,12Z)-octadecadienoyl-CoA + malonyl-CoA + H(+) = (11Z,14Z)-3-oxoicosa-11,14-dienoyl-CoA + CO2 + CoA. It catalyses the reaction (9Z)-octadecenoyl-CoA + malonyl-CoA + H(+) = 3-oxo-(11Z)-eicosenoyl-CoA + CO2 + CoA. The enzyme catalyses octadecanoyl-CoA + malonyl-CoA + H(+) = 3-oxoeicosanoyl-CoA + CO2 + CoA. The catalysed reaction is hexadecanoyl-CoA + malonyl-CoA + H(+) = 3-oxooctadecanoyl-CoA + CO2 + CoA. It carries out the reaction (9Z,12Z,15Z)-octadecatrienoyl-CoA + malonyl-CoA + H(+) = (11Z,14Z,17Z)-3-oxoeicosatrienoyl-CoA + CO2 + CoA. The protein operates within lipid metabolism; fatty acid biosynthesis. Its function is as follows. Catalyzes the first and rate-limiting reaction of the four reactions that constitute the long-chain fatty acids elongation cycle. This endoplasmic reticulum-bound enzymatic process allows the addition of 2 carbons to the chain of long- and very long-chain fatty acids (VLCFAs) per cycle. Condensing enzyme with higher activity toward C18 acyl-CoAs, especially C18:3(n-3) acyl-CoAs and C18:3(n-6)-CoAs. Also active toward C20:4-, C18:0-, C18:1-, C18:2- and C16:0-CoAs, and weakly toward C20:0-CoA. Little or no activity toward C22:0-, C24:0-, or C26:0-CoAs. May participate in the production of saturated and polyunsaturated VLCFAs of different chain lengths that are involved in multiple biological processes as precursors of membrane lipids and lipid mediators. This is Very long chain fatty acid elongase 7 from Homo sapiens (Human).